We begin with the raw amino-acid sequence, 94 residues long: Cell division protein FtsB (94 aa).

Residues 1–3 (MRW) are Cytoplasmic-facing. Residues 4-21 (LTVGLLAAIGLLQYPLWV) traverse the membrane as a helical segment. Topologically, residues 22–94 (GKGGWLKVWE…VQIPEKVPGK (73 aa)) are periplasmic. The stretch at 31–73 (EYDRQLQQQKEVTRKLEIRNAGLDAEVRDLKQGYDAIEERARF) forms a coiled coil.

This sequence belongs to the FtsB family. Part of a complex composed of FtsB, FtsL and FtsQ.

It is found in the cell inner membrane. In terms of biological role, essential cell division protein. May link together the upstream cell division proteins, which are predominantly cytoplasmic, with the downstream cell division proteins, which are predominantly periplasmic. This chain is Cell division protein FtsB, found in Dechloromonas aromatica (strain RCB).